Here is a 421-residue protein sequence, read N- to C-terminus: Synaptotagmin-12 (421 aa).

Residues 1 to 18 (MAVDVAEYHLSVIKSPPG) lie on the Vesicular side of the membrane. The chain crosses the membrane as a helical span at residues 19-39 (WEVGVYAAGALALLGIAAVSL). The Cytoplasmic portion of the chain corresponds to 40–421 (WKLWTSGSFP…VSMWHAVRRN (382 aa)). Residues serine 97, serine 99, and serine 214 each carry the phosphoserine modification. C2 domains lie at 152-272 (TLGQ…SGWL) and 283-416 (AVGE…SMWH).

The protein belongs to the synaptotagmin family. Homodimer. Can also form heterodimers. Interacts with SYT1. Post-translationally, phosphorylation of Ser-97 is required for mossy-fiber long-term potentiation.

Its subcellular location is the cytoplasmic vesicle. It is found in the secretory vesicle. The protein localises to the synaptic vesicle membrane. Its function is as follows. Synaptic vesicle phosphoprotein that enhances spontaneous neurotransmitter release but does not effect induced neurotransmitter release. Unlike other synaptotagmins, it does not bind Ca(2+) or phospholipids. Essential for mossy-fiber long-term potentiation in the hippocampus. In Homo sapiens (Human), this protein is Synaptotagmin-12 (SYT12).